The sequence spans 226 residues: uncharacterized protein (226 aa).

The chain crosses the membrane as a helical span at residues 121 to 141; sequence YLIGNIIGLPLTIPFILIPLI.

The protein to yeast YDL183c.

The protein localises to the membrane. This is an uncharacterized protein from Schizosaccharomyces pombe (strain 972 / ATCC 24843) (Fission yeast).